Reading from the N-terminus, the 1236-residue chain is Calcium-activated potassium channel subunit alpha-1 (1236 aa).

Residues 1–21 (MANGGGGGGGSSGGGGGGGGS) are compositionally biased toward gly residues. Residues 1-61 (MANGGGGGGG…SSSSSSSSSV (61 aa)) are disordered. The Extracellular segment spans residues 1–86 (MANGGGGGGG…VPCDSRGQRM (86 aa)). Over residues 39 to 60 (SSSSSSSSSSSSSSSSSSSSSS) the composition is skewed to low complexity. The chain crosses the membrane as a helical span at residues 87-107 (WWAFLASSMVTFFGGLFIILL). Residues 108–178 (WRTLKYLWTV…MISAQTLTGR (71 aa)) lie on the Cytoplasmic side of the membrane. S-palmitoyl cysteine attachment occurs at residues C118, C119, and C121. A helical transmembrane segment spans residues 179–199 (VLVVLVFALSIGALVIYFIDS). At 200–214 (SNPIESCQNFYKDFT) the chain is on the extracellular side. A helical membrane pass occupies residues 215-235 (LQIDMAFNVFFLLYFGLRFIA). Residues 236–239 (ANDK) lie on the Cytoplasmic side of the membrane. A helical transmembrane segment spans residues 240-260 (LWFWLEVNSVVDFFTVPPVFV). The Extracellular portion of the chain corresponds to 261–264 (SVYL). A helical transmembrane segment spans residues 265–285 (NRSWLGLRFLRALRLIQFSEI). The Cytoplasmic portion of the chain corresponds to 286 to 300 (LQFLNILKTSNSIKL). A helical membrane pass occupies residues 301–321 (VNLLSIFISTWLTAAGFIHLV). Residues 322-335 (ENSGDPWENFQNNQ) lie on the Extracellular side of the membrane. The pore-forming intramembrane region spans 336 to 358 (ALTYWECVYLLMVTMSTVGYGDV). A Selectivity for potassium motif is present at residues 352-355 (TVGY). Residues 359 to 367 (YAKTTLGRL) lie on the Extracellular side of the membrane. Residues 368 to 388 (FMVFFILGGLAMFASYVPEII) form a helical membrane-spanning segment. Residues 389–1236 (ELIGNRKKYG…KQKYVQEERL (848 aa)) are Cytoplasmic-facing. In terms of domain architecture, RCK N-terminal 1 spans 407–549 (RKHIVVCGHI…WNWKEGDDAI (143 aa)). Residues E439, Q462, and E464 each contribute to the Mg(2+) site. The segment S7 stretch occupies residues 556 to 576 (LGFIAQSCLAQGLSTMLANLF). A segment S8 region spans residues 613-633 (LSFPTVCELCFVKLKLLMIAI). The interval 677–681 (CKACH) is heme-binding motif. The interval 757 to 787 (EDEQPSTLSPKKKQRNGGMRNSPNTSPKLMR) is disordered. Position 763 is a phosphothreonine (T763). 3 positions are modified to phosphoserine: S765, S778, and S782. The segment S9 stretch occupies residues 837 to 857 (VLSGHVVVCIFGDVSSALIGL). Residues 839–983 (SGHVVVCIFG…MDRSSPDNSP (145 aa)) enclose the RCK N-terminal 2 domain. T970 carries the post-translational modification Phosphothreonine. Residues S978 and S982 each carry the phosphoserine modification. Residues 1003-1025 (TELVNDTNVQFLDQDDDDDPDTE) carry the Calcium bowl motif. Positions 1012, 1015, 1018, and 1020 each coordinate Ca(2+). The interval 1032–1052 (FACGTAFAVSVLDSLMSATYF) is segment S10. Over residues 1186–1211 (RASLSHSSHSSQSSSKKSSSVHSIPS) the composition is skewed to low complexity. The disordered stretch occupies residues 1186 to 1236 (RASLSHSSHSSQSSSKKSSSVHSIPSTANRQNRPKSRESRDKQKYVQEERL). A compositionally biased stretch (basic and acidic residues) spans 1220-1236 (KSRESRDKQKYVQEERL). S1221 and S1224 each carry phosphoserine.

Belongs to the potassium channel family. Calcium-activated (TC 1.A.1.3) subfamily. KCa1.1/KCNMA1 sub-subfamily. As to quaternary structure, homotetramer; which constitutes the calcium-activated potassium channel. Interacts with RAB11B. Interacts with beta subunits KCNMB1, KCNMB2, KCNMB3 and KCNMB4. Interacts with gamma subunits LRRC26, LRRC38, LRRC52 and LRRC55. Beta and gamma subunits are accessory, and modulate its activity. Phosphorylated. Phosphorylation by kinases such as PKA and/or PKG. In smooth muscles, phosphorylation affects its activity. In terms of processing, palmitoylation by ZDHHC22 and ZDHHC23 within the intracellular linker between the S0 and S1 transmembrane domains regulates localization to the plasma membrane. Depalmitoylated by LYPLA1 and LYPLAL1, leading to retard exit from the trans-Golgi network. In terms of tissue distribution, widely expressed. Except in myocytes, it is almost ubiquitously expressed.

It is found in the cell membrane. The enzyme catalyses K(+)(in) = K(+)(out). Ethanol and carbon monoxide-bound heme increase channel activation. Heme inhibits channel activation. Its function is as follows. Potassium channel activated by both membrane depolarization or increase in cytosolic Ca(2+) that mediates export of K(+). It is also activated by the concentration of cytosolic Mg(2+). Its activation dampens the excitatory events that elevate the cytosolic Ca(2+) concentration and/or depolarize the cell membrane. It therefore contributes to repolarization of the membrane potential. Plays a key role in controlling excitability in a number of systems, such as regulation of the contraction of smooth muscle, the tuning of hair cells in the cochlea, regulation of transmitter release, and innate immunity. In smooth muscles, its activation by high level of Ca(2+), caused by ryanodine receptors in the sarcoplasmic reticulum, regulates the membrane potential. In cochlea cells, its number and kinetic properties partly determine the characteristic frequency of each hair cell and thereby helps to establish a tonotopic map. Kinetics of KCNMA1 channels are determined by alternative splicing, phosphorylation status and its combination with modulating beta subunits. Highly sensitive to both iberiotoxin (IbTx) and charybdotoxin (CTX). Possibly induces sleep when activated by melatonin and through melatonin receptor MTNR1A-dependent dissociation of G-beta and G-gamma subunits, leading to increased sensitivity to Ca(2+) and reduced synaptic transmission. In terms of biological role, potassium channel activated by both membrane depolarization or increase in cytosolic Ca(2+) that mediates export of K(+). This chain is Calcium-activated potassium channel subunit alpha-1, found in Homo sapiens (Human).